Consider the following 346-residue polypeptide: GTPase Obg (346 aa).

The Obg domain maps to 1 to 159 (MRFVDEVTFV…RELRLELQLL (159 aa)). The interval 128 to 148 (LHFKSSTNRAPRQSTEGTAGE) is disordered. Positions 130-144 (FKSSTNRAPRQSTEG) are enriched in polar residues. The 176-residue stretch at 160-335 (ADVGLLGMPN…LCGDIMNDLE (176 aa)) folds into the OBG-type G domain. GTP is bound by residues 166 to 173 (GMPNVGKS), 191 to 195 (FTTLY), 213 to 216 (DIPG), 285 to 288 (NRLD), and 316 to 318 (SGL). Residues Ser-173 and Thr-193 each contribute to the Mg(2+) site.

It belongs to the TRAFAC class OBG-HflX-like GTPase superfamily. OBG GTPase family. In terms of assembly, monomer. It depends on Mg(2+) as a cofactor.

Its subcellular location is the cytoplasm. An essential GTPase which binds GTP, GDP and possibly (p)ppGpp with moderate affinity, with high nucleotide exchange rates and a fairly low GTP hydrolysis rate. Plays a role in control of the cell cycle, stress response, ribosome biogenesis and in those bacteria that undergo differentiation, in morphogenesis control. This is GTPase Obg from Halorhodospira halophila (strain DSM 244 / SL1) (Ectothiorhodospira halophila (strain DSM 244 / SL1)).